The following is a 370-amino-acid chain: Phosphoserine aminotransferase (370 aa).

Met1 carries the N-acetylmethionine modification. O-phospho-L-serine is bound by residues His44 and Arg45. At Lys51 the chain carries N6-acetyllysine. Pyridoxal 5'-phosphate is bound by residues Gly79, Cys80, and Trp107. N6-acetyllysine is present on Lys127. Positions 156, 176, and 199 each coordinate pyridoxal 5'-phosphate. The residue at position 200 (Lys200) is an N6-(pyridoxal phosphate)lysine. 2 residues coordinate pyridoxal 5'-phosphate: Asn241 and Thr242. N6-acetyllysine occurs at positions 269, 318, and 323. At Ser331 the chain carries Phosphoserine. At Lys333 the chain carries N6-acetyllysine. Positions 335, 336, and 342 each coordinate O-phospho-L-serine.

It belongs to the class-V pyridoxal-phosphate-dependent aminotransferase family. SerC subfamily. In terms of assembly, homodimer. Pyridoxal 5'-phosphate serves as cofactor.

It carries out the reaction O-phospho-L-serine + 2-oxoglutarate = 3-phosphooxypyruvate + L-glutamate. It functions in the pathway amino-acid biosynthesis; L-serine biosynthesis; L-serine from 3-phospho-D-glycerate: step 2/3. Its function is as follows. Involved in L-serine biosynthesis via the phosphorylated pathway, a three-step pathway converting the glycolytic intermediate 3-phospho-D-glycerate into L-serine. Catalyzes the second step, that is the pyridoxal 5'-phosphate-dependent transamination of 3-phosphohydroxypyruvate and L-glutamate to O-phosphoserine (OPS) and alpha-ketoglutarate. This chain is Phosphoserine aminotransferase (PSAT1), found in Oryctolagus cuniculus (Rabbit).